The sequence spans 273 residues: 4-hydroxy-tetrahydrodipicolinate reductase (273 aa).

12–17 (GSGGRM) is a binding site for NAD(+). Arg39 serves as a coordination point for NADP(+). NAD(+) contacts are provided by residues 102 to 104 (GTT) and 126 to 129 (AANF). His159 functions as the Proton donor/acceptor in the catalytic mechanism. His160 lines the (S)-2,3,4,5-tetrahydrodipicolinate pocket. Lys163 serves as the catalytic Proton donor. (S)-2,3,4,5-tetrahydrodipicolinate is bound at residue 169-170 (GT).

The protein belongs to the DapB family. In terms of assembly, homotetramer.

It is found in the cytoplasm. The catalysed reaction is (S)-2,3,4,5-tetrahydrodipicolinate + NAD(+) + H2O = (2S,4S)-4-hydroxy-2,3,4,5-tetrahydrodipicolinate + NADH + H(+). The enzyme catalyses (S)-2,3,4,5-tetrahydrodipicolinate + NADP(+) + H2O = (2S,4S)-4-hydroxy-2,3,4,5-tetrahydrodipicolinate + NADPH + H(+). It participates in amino-acid biosynthesis; L-lysine biosynthesis via DAP pathway; (S)-tetrahydrodipicolinate from L-aspartate: step 4/4. In terms of biological role, catalyzes the conversion of 4-hydroxy-tetrahydrodipicolinate (HTPA) to tetrahydrodipicolinate. This chain is 4-hydroxy-tetrahydrodipicolinate reductase, found in Serratia proteamaculans (strain 568).